A 349-amino-acid chain; its full sequence is Ribosomal RNA large subunit methyltransferase Cfr (349 aa).

E89 serves as the catalytic Proton acceptor. Positions 96–331 constitute a Radical SAM core domain; that stretch reads KAGWESFCIS…VTVRSQFGID (236 aa). The cysteines at positions 103 and 336 are disulfide-linked. Positions 110, 114, and 117 each coordinate [4Fe-4S] cluster. Residues 156–157, S187, 210–212, and N291 contribute to the S-adenosyl-L-methionine site; these read GE and SLH. Residue C336 is the S-methylcysteine intermediate of the active site.

The protein belongs to the radical SAM superfamily. RlmN family. Cfr subfamily. The cofactor is [4Fe-4S] cluster.

The protein resides in the cytoplasm. It carries out the reaction adenosine(2503) in 23S rRNA + 2 reduced [2Fe-2S]-[ferredoxin] + 2 S-adenosyl-L-methionine = 8-methyladenosine(2503) in 23S rRNA + 5'-deoxyadenosine + L-methionine + 2 oxidized [2Fe-2S]-[ferredoxin] + S-adenosyl-L-homocysteine. Its function is as follows. Specifically methylates position 8 of adenine 2503 in 23S rRNA. Confers resistance to some classes of antibiotics. The chain is Ribosomal RNA large subunit methyltransferase Cfr from Bacillus velezensis (strain DSM 23117 / BGSC 10A6 / LMG 26770 / FZB42) (Bacillus amyloliquefaciens subsp. plantarum).